The primary structure comprises 275 residues: L-aspartate dehydrogenase (275 aa).

NAD(+) contacts are provided by Ala130 and Asn196. His226 is an active-site residue.

It belongs to the L-aspartate dehydrogenase family.

The catalysed reaction is L-aspartate + NADP(+) + H2O = oxaloacetate + NH4(+) + NADPH + H(+). It carries out the reaction L-aspartate + NAD(+) + H2O = oxaloacetate + NH4(+) + NADH + H(+). It functions in the pathway cofactor biosynthesis; NAD(+) biosynthesis; iminoaspartate from L-aspartate (dehydrogenase route): step 1/1. Functionally, specifically catalyzes the NAD or NADP-dependent dehydrogenation of L-aspartate to iminoaspartate. This chain is L-aspartate dehydrogenase, found in Ruegeria pomeroyi (strain ATCC 700808 / DSM 15171 / DSS-3) (Silicibacter pomeroyi).